We begin with the raw amino-acid sequence, 426 residues long: MSAIVDITSREILDSRGNPTVEVEVELSSGARGRAAVPSGASTGAHEAVELRDGDKSRYGGKGVLKACSHVENDILEVLQGAESEDQIAIDNAMIDLDGTPNKSRLGANAILGVSLAVAKATAEELELPLYRYVGGAYAHLLPVPMMNIVNGGEHADNPIDIQEFMIQPVGAPTVADAIRMGSEIFARLKKGLSEAGYNTNVGDEGGFAPNLKSADEALGFIAKSVEAAGYKLGEDVTFALDCAATEFYADGRYNLKGEGKEFDASGMISYLEDLANRYPIVSIEDGLAEDDWEGWAELTTRLGKKLQLVGDDLFVTNPERLRRGIKAGTGNALLVKVNQIGTLTETLEAVETAHKAGYACVMSHRSGETEDSVIADLAVATNCGQIKTGSLSRSDRTAKYNQLIRIEQQLGSAARYAGRSILKNS.

(2R)-2-phosphoglycerate is bound at residue glutamine 163. Glutamate 205 functions as the Proton donor in the catalytic mechanism. Positions 242, 285, and 312 each coordinate Mg(2+). Residues lysine 337, arginine 366, serine 367, and lysine 388 each contribute to the (2R)-2-phosphoglycerate site. Catalysis depends on lysine 337, which acts as the Proton acceptor.

The protein belongs to the enolase family. Mg(2+) serves as cofactor.

It is found in the cytoplasm. Its subcellular location is the secreted. The protein localises to the cell surface. It catalyses the reaction (2R)-2-phosphoglycerate = phosphoenolpyruvate + H2O. Its pathway is carbohydrate degradation; glycolysis; pyruvate from D-glyceraldehyde 3-phosphate: step 4/5. Its function is as follows. Catalyzes the reversible conversion of 2-phosphoglycerate (2-PG) into phosphoenolpyruvate (PEP). It is essential for the degradation of carbohydrates via glycolysis. This is Enolase from Gluconobacter oxydans (strain 621H) (Gluconobacter suboxydans).